Consider the following 93-residue polypeptide: Small ribosomal subunit protein uS19 (93 aa).

This sequence belongs to the universal ribosomal protein uS19 family.

Protein S19 forms a complex with S13 that binds strongly to the 16S ribosomal RNA. In Citrifermentans bemidjiense (strain ATCC BAA-1014 / DSM 16622 / JCM 12645 / Bem) (Geobacter bemidjiensis), this protein is Small ribosomal subunit protein uS19.